Here is a 192-residue protein sequence, read N- to C-terminus: Ion-translocating oxidoreductase complex subunit B (192 aa).

The interval 1–26 (MSTIWIAIAALSALALAFGLVLGYAS) is hydrophobic. Residues 32–91 (ENDPIVEEVEAMLPQSQCGQCGYPGCRPYAEAVALNGENINKCGPGGEAMMLKLAEKLNV) form the 4Fe-4S domain. Residues Cys49, Cys52, Cys57, Cys74, Cys117, Cys120, Cys123, Cys127, Cys147, Cys150, Cys153, and Cys157 each coordinate [4Fe-4S] cluster. 2 4Fe-4S ferredoxin-type domains span residues 108–137 (QVAWIDESNCIGCTKCIQACPVDAIIGSTK) and 138–167 (AVHTVVSDLCTGCDLCVAPCPTDCIELRPI).

The protein belongs to the 4Fe4S bacterial-type ferredoxin family. RnfB subfamily. In terms of assembly, the complex is composed of six subunits: RnfA, RnfB, RnfC, RnfD, RnfE and RnfG. It depends on [4Fe-4S] cluster as a cofactor.

It localises to the cell inner membrane. In terms of biological role, part of a membrane-bound complex that couples electron transfer with translocation of ions across the membrane. The chain is Ion-translocating oxidoreductase complex subunit B from Pectobacterium carotovorum subsp. carotovorum (strain PC1).